Reading from the N-terminus, the 272-residue chain is NADPH-dependent 7-cyano-7-deazaguanine reductase (272 aa).

82–84 (IES) is a substrate binding site. 84–85 (SK) is an NADPH binding site. C178 functions as the Thioimide intermediate in the catalytic mechanism. Residue D185 is the Proton donor of the active site. Residue 217–218 (HE) participates in substrate binding. 246 to 247 (RG) lines the NADPH pocket.

It belongs to the GTP cyclohydrolase I family. QueF type 2 subfamily. Homodimer.

It is found in the cytoplasm. It catalyses the reaction 7-aminomethyl-7-carbaguanine + 2 NADP(+) = 7-cyano-7-deazaguanine + 2 NADPH + 3 H(+). It participates in tRNA modification; tRNA-queuosine biosynthesis. Catalyzes the NADPH-dependent reduction of 7-cyano-7-deazaguanine (preQ0) to 7-aminomethyl-7-deazaguanine (preQ1). This chain is NADPH-dependent 7-cyano-7-deazaguanine reductase, found in Stenotrophomonas maltophilia (strain K279a).